The primary structure comprises 169 residues: CKLF-like MARVEL transmembrane domain-containing protein 1 (169 aa).

The MARVEL domain occupies 17–135 (NLKQPETAAA…DAFVVTTKMR (119 aa)). 4 helical membrane-spanning segments follow: residues 22-42 (ETAA…ITQA), 46-66 (FITI…IYVL), 79-99 (LLDL…AILA), and 110-130 (YVGG…AFVV).

Belongs to the chemokine-like factor family. As to expression, highly expressed in testis.

It is found in the membrane. This chain is CKLF-like MARVEL transmembrane domain-containing protein 1 (CMTM1), found in Homo sapiens (Human).